The sequence spans 129 residues: Glycine cleavage system H protein (129 aa).

The 83-residue stretch at 24–106 folds into the Lipoyl-binding domain; sequence SYTVGITEHA…YGEGWFFRVM (83 aa). N6-lipoyllysine is present on lysine 65.

This sequence belongs to the GcvH family. The glycine cleavage system is composed of four proteins: P, T, L and H. (R)-lipoate is required as a cofactor.

In terms of biological role, the glycine cleavage system catalyzes the degradation of glycine. The H protein shuttles the methylamine group of glycine from the P protein to the T protein. The protein is Glycine cleavage system H protein of Shewanella oneidensis (strain ATCC 700550 / JCM 31522 / CIP 106686 / LMG 19005 / NCIMB 14063 / MR-1).